The chain runs to 185 residues: MISTNEFRTGLTVEVDGDPCQVIEFMHVKPGKGSPFVRAKLKNLRTGAIAERTFNAGEKLPRAILERKEMQYLYNDGANYYLMDNETYDQVGLSAGQLGDGVKYLKENMIINVVYHRGQVLGVDLPNTVELTVIETTPGIRGDTASGGSKPAVLETGVVLQVPLFVEEGDVIQVDTRSGAYIKRA.

The protein belongs to the elongation factor P family.

The protein resides in the cytoplasm. Its pathway is protein biosynthesis; polypeptide chain elongation. Functionally, involved in peptide bond synthesis. Stimulates efficient translation and peptide-bond synthesis on native or reconstituted 70S ribosomes in vitro. Probably functions indirectly by altering the affinity of the ribosome for aminoacyl-tRNA, thus increasing their reactivity as acceptors for peptidyl transferase. In Desulforudis audaxviator (strain MP104C), this protein is Elongation factor P.